The chain runs to 153 residues: Peptidyl-prolyl cis-trans isomerase FKBP15-1 (153 aa).

Residues 1–25 (MMSSASAMKAVGFLLLLTILTLAYA) form the signal peptide. The 89-residue stretch at 52-140 (GDKIKVHYRG…IFDTELVAVN (89 aa)) folds into the PPIase FKBP-type domain. The short motif at 150–153 (KNEL) is the Prevents secretion from ER element.

It belongs to the FKBP-type PPIase family.

Its subcellular location is the endoplasmic reticulum lumen. It catalyses the reaction [protein]-peptidylproline (omega=180) = [protein]-peptidylproline (omega=0). PPIases accelerate the folding of proteins. It catalyzes the cis-trans isomerization of proline imidic peptide bonds in oligopeptides. The sequence is that of Peptidyl-prolyl cis-trans isomerase FKBP15-1 (FKBP15-1) from Arabidopsis thaliana (Mouse-ear cress).